A 332-amino-acid polypeptide reads, in one-letter code: tRNA-dihydrouridine(20/20a) synthase (332 aa).

FMN-binding positions include Pro19–Leu21 and Gln71. Residue Cys101 is the Proton donor of the active site. Residues Lys140, His173, Asn213–Gly215, and Gly235–Arg236 contribute to the FMN site.

The protein belongs to the Dus family. DusA subfamily. The cofactor is FMN.

The enzyme catalyses 5,6-dihydrouridine(20) in tRNA + NADP(+) = uridine(20) in tRNA + NADPH + H(+). The catalysed reaction is 5,6-dihydrouridine(20) in tRNA + NAD(+) = uridine(20) in tRNA + NADH + H(+). It carries out the reaction 5,6-dihydrouridine(20a) in tRNA + NADP(+) = uridine(20a) in tRNA + NADPH + H(+). It catalyses the reaction 5,6-dihydrouridine(20a) in tRNA + NAD(+) = uridine(20a) in tRNA + NADH + H(+). Catalyzes the synthesis of 5,6-dihydrouridine (D), a modified base found in the D-loop of most tRNAs, via the reduction of the C5-C6 double bond in target uridines. Specifically modifies U20 and U20a in tRNAs. The protein is tRNA-dihydrouridine(20/20a) synthase of Salmonella typhimurium (strain LT2 / SGSC1412 / ATCC 700720).